We begin with the raw amino-acid sequence, 297 residues long: Esterase LipU (297 aa).

Catalysis depends on residues Ser-140, Glu-239, and His-269.

It belongs to the 'GDXG' lipolytic enzyme family.

It is found in the secreted. It carries out the reaction a fatty acid ester + H2O = an aliphatic alcohol + a fatty acid + H(+). The enzyme catalyses a butanoate ester + H2O = an aliphatic alcohol + butanoate + H(+). The catalysed reaction is an acetyl ester + H2O = an aliphatic alcohol + acetate + H(+). It catalyses the reaction decanoate ester + H2O = decanoate + an aliphatic alcohol + H(+). It carries out the reaction an octanoate ester + H2O = an aliphatic alcohol + octanoate + H(+). The enzyme catalyses a dodecanoate ester + H2O = an aliphatic alcohol + dodecanoate + H(+). The catalysed reaction is hexadecanoate ester + H2O = an aliphatic alcohol + hexadecanoate + H(+). Inhibited by the ionic detergent SDS and by the serine protease inhibitor PMSF. Inhibited by the FDA approved drugs Diosmin, Acarbose and Ouabain. These drugs remain bound in the active site pocket and could be probable drug candidates to combat TB disease. Its function is as follows. Esterase that shows preference for short chain fatty acids. Contributes to the growth of M.tuberculosis during the nutritive stress. Elicits strong humoral response in both extrapulmonary and relapsed cases of tuberculosis patients. The protein is Esterase LipU of Mycobacterium tuberculosis (strain ATCC 25618 / H37Rv).